The following is a 212-amino-acid chain: Cyclin-dependent kinase inhibitor 3 (212 aa).

Positions 1–12 are enriched in polar residues; it reads MKPPSSIQTSEF. The disordered stretch occupies residues 1–20; it reads MKPPSSIQTSEFDSSDEEPI. The interval 1 to 34 is interaction with CDK2; it reads MKPPSSIQTSEFDSSDEEPIEDEQTPIHISWLSL. A Tyrosine-protein phosphatase domain is found at 33 to 201; the sequence is SLSRVNCSQF…FRDKLAAHLS (169 aa). Catalysis depends on cysteine 140, which acts as the Phosphocysteine intermediate.

This sequence belongs to the protein-tyrosine phosphatase family. In terms of assembly, interacts with cyclin-dependent kinases such as CDK1, CDK2 and CDK3. Does not interact with CDK4. Interacts (via C-terminus) with phosphorylated CDK2 (via C-terminal helix). Interacts with MS4A3 (via C-terminus); the interaction enhances CDKN3 enzymatic activity.

It is found in the cytoplasm. Its subcellular location is the perinuclear region. The enzyme catalyses O-phospho-L-tyrosyl-[protein] + H2O = L-tyrosyl-[protein] + phosphate. It catalyses the reaction O-phospho-L-threonyl-[protein] + H2O = L-threonyl-[protein] + phosphate. The catalysed reaction is O-phospho-L-seryl-[protein] + H2O = L-seryl-[protein] + phosphate. In terms of biological role, may play a role in cell cycle regulation. Dual specificity CC phosphatase active toward substrates containing either phosphotyrosine or phosphoserine residues. Dephosphorylates CDK2 at 'Thr-160' in a cyclin-dependent manner. The chain is Cyclin-dependent kinase inhibitor 3 from Homo sapiens (Human).